The primary structure comprises 634 residues: Sodium-dependent multivitamin transporter (634 aa).

The next 12 membrane-spanning stretches (helical) occupy residues 23–43, 65–85, 100–120, 142–162, 175–195, 207–227, 255–275, 295–315, 350–370, 403–423, 427–447, and 455–475; these read FSVVDYVVFGLLLVLSLVIGL, MGCLPVALSLLATFQSAVAIL, FLGCSYFLGLLIPAHIFIPVF, ICGTVTFIFQMVVYMGVALYA, LWLSVLALGIVCNIYTALGGL, LIMFLGQLVVIIVGAAKVGGL, FWTLAFGGVFMMLSLYGVNQA, AVFPCQQVALCMSCLIGLVMF, LPGLFVACLFSGSLSTISSAF, FAYGLVCLGMAYVSSHLGSVL, LSIFGMVGGPLLGLFCLGMFF, and AIVGLLTGLTMAFWIGIGSIV. Residues N488 and N497 are each glycosylated (N-linked (GlcNAc...) asparagine). The helical transmembrane segment at 526–546 threads the bilayer; it reads LWYSAHNSTTVIAVGLIVSLL.

Belongs to the sodium:solute symporter (SSF) (TC 2.A.21) family. As to quaternary structure, interacts with PDZD11. In terms of tissue distribution, expressed in the jejunum (at protein level). Expressed in lung, skeletal muscle, heart, brain, kidney, intestine, liver, and placenta.

The protein resides in the cell membrane. Its subcellular location is the apical cell membrane. It catalyses the reaction biotin(out) + 2 Na(+)(out) = biotin(in) + 2 Na(+)(in). The catalysed reaction is (R)-pantothenate(out) + 2 Na(+)(out) = (R)-pantothenate(in) + 2 Na(+)(in). The enzyme catalyses (R)-lipoate(out) + 2 Na(+)(out) = (R)-lipoate(in) + 2 Na(+)(in). It carries out the reaction iodide(out) + 2 Na(+)(out) = iodide(in) + 2 Na(+)(in). In terms of biological role, sodium-dependent multivitamin transporter that mediates the electrogenic transport of pantothenate, biotin, lipoate and iodide. Functions as a Na(+)-coupled substrate symporter where the stoichiometry of Na(+):substrate is 2:1, creating an electrochemical Na(+) gradient used as driving force for substrate uptake. Required for biotin and pantothenate uptake in the intestine across the brush border membrane. Plays a role in the maintenance of intestinal mucosa integrity, by providing the gut mucosa with biotin. Contributes to the luminal uptake of biotin and pantothenate into the brain across the blood-brain barrier. The sequence is that of Sodium-dependent multivitamin transporter from Rattus norvegicus (Rat).